We begin with the raw amino-acid sequence, 354 residues long: Rhodopsin (354 aa).

The Extracellular portion of the chain corresponds to 1 to 36 (MNGTEGPNFYVPMSNKTGVVRSPFDYPQYYLAEPWQ). 2 N-linked (GlcNAc...) asparagine glycosylation sites follow: Asn2 and Asn15. The chain crosses the membrane as a helical span at residues 37-61 (YSALAAYMFLLILLGLPINFMTLFV). The Cytoplasmic segment spans residues 62 to 73 (TIQHKKLRTPLN). The chain crosses the membrane as a helical span at residues 74 to 96 (YILLNLVFANHFMVLCGFTVTMY). Residues 97–110 (TSMHGYFIFGPTGC) are Extracellular-facing. Cys110 and Cys187 are joined by a disulfide. The chain crosses the membrane as a helical span at residues 111–133 (YIEGFFATLGGEVALWSLVVLAV). The 'Ionic lock' involved in activated form stabilization motif lies at 134–136 (ERY). At 134–152 (ERYIVVCKPMANFRFGENH) the chain is on the cytoplasmic side. The helical transmembrane segment at 153 to 173 (AIMGVAFTWIMALSCAAPPLF) threads the bilayer. Residues 174-202 (GWSRYIPEGMQCSCGVDYYTLKPEVNNES) are Extracellular-facing. A helical membrane pass occupies residues 203 to 224 (FVIYMFIVHFTIPLIVIFFCYG). Over 225–252 (RLLCTVKEAAAQQQESLTTQKAEKEVTR) the chain is Cytoplasmic. The chain crosses the membrane as a helical span at residues 253–274 (MVVIMVVFFLICWVPYAYVAFY). At 275-286 (IFTHQGSNFGPV) the chain is on the extracellular side. A helical membrane pass occupies residues 287 to 308 (FMTVPAFFAKSSAIYNPVIYIV). Lys296 bears the N6-(retinylidene)lysine mark. The Cytoplasmic segment spans residues 309-354 (LNKQFRNCLITTLCCGKNPFGDEDGSSAATSKTEASSVSSSQVSPA). Residues Cys322 and Cys323 are each lipidated (S-palmitoyl cysteine). Positions 331–354 (EDGSSAATSKTEASSVSSSQVSPA) are disordered. A compositionally biased stretch (low complexity) spans 334–354 (SSAATSKTEASSVSSSQVSPA).

Belongs to the G-protein coupled receptor 1 family. Opsin subfamily. Contains one covalently linked retinal chromophore. Upon light absorption, the covalently bound 11-cis-retinal is converted to all-trans-retinal. After hydrolysis of the Schiff base and release of the covalently bound all-trans-retinal, active rhodopsin is regenerated by binding of a fresh molecule of 11-cis-retinal.

The protein resides in the membrane. The protein localises to the cell projection. It localises to the cilium. It is found in the photoreceptor outer segment. Functionally, photoreceptor required for image-forming vision at low light intensity. Required for photoreceptor cell viability after birth. Light-induced isomerization of 11-cis to all-trans retinal triggers a conformational change that activates signaling via G-proteins. Subsequent receptor phosphorylation mediates displacement of the bound G-protein alpha subunit by arrestin and terminates signaling. The protein is Rhodopsin (rho) of Xenopus laevis (African clawed frog).